We begin with the raw amino-acid sequence, 1103 residues long: PALM2-AKAP2 fusion protein (1103 aa).

2 disordered regions span residues 178–197 and 304–396; these read ESAS…KKPP and YNGT…SSRD. The segment covering 179–189 has biased composition (polar residues); that stretch reads SASNATETSGP. 3 positions are modified to phosphoserine: Ser-322, Ser-352, and Ser-383. Residues 380–392 show a composition bias toward low complexity; the sequence is VPVSPSSTTSSRC. Lys-405 is covalently cross-linked (Glycyl lysine isopeptide (Lys-Gly) (interchain with G-Cter in SUMO1); alternate). Residue Lys-405 forms a Glycyl lysine isopeptide (Lys-Gly) (interchain with G-Cter in SUMO2); alternate linkage. The stretch at 444–521 forms a coiled coil; that stretch reads EEMLELEKER…QKQLQQQQQQ (78 aa). 2 disordered regions span residues 483-544 and 566-662; these read EQLD…DKAK and NSRQ…SKLW. Residues 490 to 505 are compositionally biased toward basic and acidic residues; it reads LESHKKYKERKERRAQ. Positions 506–521 are enriched in low complexity; the sequence is QEQLLLQKQLQQQQQQ. A compositionally biased stretch (polar residues) spans 522–531; it reads PPSQLCTAPA. A compositionally biased stretch (basic and acidic residues) spans 533 to 544; sequence SHERASMIDKAK. Polar residues predominate over residues 566-579; it reads NSRQAVAKGQSTPR. 2 positions are modified to phosphoserine: Ser-567 and Ser-624. The span at 633–643 shows a compositional bias: polar residues; it reads AAGSQGNTASQ. Phosphoserine is present on residues Ser-692, Ser-696, and Ser-748. Residues 745–763 show a composition bias toward polar residues; it reads QENSLADFSLPQTPQTDNP. The disordered stretch occupies residues 745 to 794; the sequence is QENSLADFSLPQTPQTDNPSEGRGEGVSKSFSDHGFYSPSSTLGDSPLVD. Phosphothreonine is present on Thr-757. Residues 797-810 are PKA-RII subunit binding domain; sequence LEYQAGLLVQNAIQ. Residues 817-829 are compositionally biased toward basic and acidic residues; the sequence is VDKAVSKTSRDGA. Positions 817 to 907 are disordered; it reads VDKAVSKTSR…GPINMEETRP (91 aa). Ser-862 carries the post-translational modification Phosphoserine. Over residues 865-886 the composition is skewed to basic and acidic residues; sequence QEKRDVLPKILPAEDRALRERG. Residues 941 to 979 adopt a coiled-coil conformation; the sequence is KLRSRKQRTLSMIEEEIRAAQEREEELKRQRQVLQSTQS. A phosphoserine mark is found at Ser-951, Ser-979, Ser-1009, and Ser-1016. The tract at residues 962-1035 is disordered; it reads EREEELKRQR…AAGTQRPKNL (74 aa). Over residues 976 to 990 the composition is skewed to polar residues; it reads STQSPRTKNAPSLPS.

As to expression, expressed in infantile heart and muscle, and fibroblasts.

It is found in the apical cell membrane. Its function is as follows. Binds to regulatory subunit (RII) of protein kinase A. May be involved in establishing polarity in signaling systems or in integrating PKA-RII isoforms with downstream effectors to capture, amplify and focus diffuse, trans-cellular signals carried by cAMP. Binds to and modulates the structure of the actin cytoskeleton. The sequence is that of PALM2-AKAP2 fusion protein from Homo sapiens (Human).